The following is a 137-amino-acid chain: Small ribosomal subunit protein uS9c (137 aa).

Belongs to the universal ribosomal protein uS9 family.

Its subcellular location is the plastid. The protein resides in the chloroplast. This Gracilaria tenuistipitata var. liui (Red alga) protein is Small ribosomal subunit protein uS9c (rps9).